A 95-amino-acid polypeptide reads, in one-letter code: Phospholipase A2 inhibitor gammaCdcPLI (95 aa).

Cystine bridges form between Cys-2–Cys-26, Cys-5–Cys-12, Cys-19–Cys-30, and Cys-61–Cys-77.

In terms of assembly, forms dimers or higher order oligomers in a temperature-dependent manner in vitro. As to expression, expressed by the liver.

Its subcellular location is the secreted. Functionally, inhibits the enzymatic activity of basic and acidic PLA2 from B.jararacussu and B.pauloensis, respectively, in a dose-dependent manner. Also inhibits myotoxicity and cytotoxicity of BnSp-7 of B.pauloensis. The chain is Phospholipase A2 inhibitor gammaCdcPLI from Crotalus durissus collilineatus (Brazilian rattlesnake).